Consider the following 320-residue polypeptide: Cytochrome f (320 aa).

A signal peptide spans 1–35; it reads MQTRNTFSWIKEEITRSISVSLMIYIITGASISNA. Positions 36, 56, 59, and 60 each coordinate heme. A helical transmembrane segment spans residues 286-306; that stretch reads VQGLLFFLASIVFAQIFLVLK.

It belongs to the cytochrome f family. As to quaternary structure, the 4 large subunits of the cytochrome b6-f complex are cytochrome b6, subunit IV (17 kDa polypeptide, petD), cytochrome f and the Rieske protein, while the 4 small subunits are PetG, PetL, PetM and PetN. The complex functions as a dimer. It depends on heme as a cofactor.

It localises to the plastid. The protein localises to the chloroplast thylakoid membrane. Component of the cytochrome b6-f complex, which mediates electron transfer between photosystem II (PSII) and photosystem I (PSI), cyclic electron flow around PSI, and state transitions. In Gossypium hirsutum (Upland cotton), this protein is Cytochrome f.